Here is a 313-residue protein sequence, read N- to C-terminus: ADP-L-glycero-D-manno-heptose-6-epimerase (313 aa).

NADP(+)-binding positions include 10 to 11, 31 to 32, lysine 38, arginine 53, 75 to 79, and asparagine 92; these read MI, DN, and EGACS. The active-site Proton acceptor is the tyrosine 139. NADP(+) is bound at residue lysine 143. Asparagine 174 contacts substrate. Residues valine 175 and lysine 183 each coordinate NADP(+). Catalysis depends on lysine 183, which acts as the Proton acceptor. Substrate contacts are provided by residues serine 185, histidine 192, 206–209, arginine 214, and tyrosine 277; that span reads FAGS.

The protein belongs to the NAD(P)-dependent epimerase/dehydratase family. HldD subfamily. Homopentamer. NADP(+) serves as cofactor.

It carries out the reaction ADP-D-glycero-beta-D-manno-heptose = ADP-L-glycero-beta-D-manno-heptose. The protein operates within nucleotide-sugar biosynthesis; ADP-L-glycero-beta-D-manno-heptose biosynthesis; ADP-L-glycero-beta-D-manno-heptose from D-glycero-beta-D-manno-heptose 7-phosphate: step 4/4. It functions in the pathway bacterial outer membrane biogenesis; LPS core biosynthesis. Its function is as follows. Catalyzes the interconversion between ADP-D-glycero-beta-D-manno-heptose and ADP-L-glycero-beta-D-manno-heptose via an epimerization at carbon 6 of the heptose. In Vibrio vulnificus (strain CMCP6), this protein is ADP-L-glycero-D-manno-heptose-6-epimerase.